Reading from the N-terminus, the 431-residue chain is Adenylosuccinate lyase (431 aa).

Residues 4–5 (RY), 67–69 (RHD), and 93–94 (TS) each bind N(6)-(1,2-dicarboxyethyl)-AMP. His141 functions as the Proton donor/acceptor in the catalytic mechanism. Residue Gln212 coordinates N(6)-(1,2-dicarboxyethyl)-AMP. The active-site Proton donor/acceptor is Ser262. Residues Ser263, 268 to 270 (KRN), Asn276, and 307 to 311 (SAERI) each bind N(6)-(1,2-dicarboxyethyl)-AMP.

This sequence belongs to the lyase 1 family. Adenylosuccinate lyase subfamily. As to quaternary structure, homodimer and homotetramer. Residues from neighboring subunits contribute catalytic and substrate-binding residues to each active site.

It catalyses the reaction N(6)-(1,2-dicarboxyethyl)-AMP = fumarate + AMP. The catalysed reaction is (2S)-2-[5-amino-1-(5-phospho-beta-D-ribosyl)imidazole-4-carboxamido]succinate = 5-amino-1-(5-phospho-beta-D-ribosyl)imidazole-4-carboxamide + fumarate. It functions in the pathway purine metabolism; AMP biosynthesis via de novo pathway; AMP from IMP: step 2/2. The protein operates within purine metabolism; IMP biosynthesis via de novo pathway; 5-amino-1-(5-phospho-D-ribosyl)imidazole-4-carboxamide from 5-amino-1-(5-phospho-D-ribosyl)imidazole-4-carboxylate: step 2/2. In terms of biological role, catalyzes two reactions in de novo purine nucleotide biosynthesis. Catalyzes the breakdown of 5-aminoimidazole- (N-succinylocarboxamide) ribotide (SAICAR or 2-[5-amino-1-(5-phospho-beta-D-ribosyl)imidazole-4-carboxamido]succinate) to 5-aminoimidazole-4-carboxamide ribotide (AICAR or 5-amino-1-(5-phospho-beta-D-ribosyl)imidazole-4-carboxamide) and fumarate, and of adenylosuccinate (ADS or N(6)-(1,2-dicarboxyethyl)-AMP) to adenosine monophosphate (AMP) and fumarate. This Staphylococcus aureus (strain USA300) protein is Adenylosuccinate lyase (purB).